The sequence spans 372 residues: UDP-N-acetylglucosamine--N-acetylmuramyl-(pentapeptide) pyrophosphoryl-undecaprenol N-acetylglucosamine transferase (372 aa).

Residues 10–12, Asn124, Arg166, Ser196, Ile256, and Gln301 contribute to the UDP-N-acetyl-alpha-D-glucosamine site; that span reads TGG.

Belongs to the glycosyltransferase 28 family. MurG subfamily.

Its subcellular location is the cell membrane. It carries out the reaction di-trans,octa-cis-undecaprenyl diphospho-N-acetyl-alpha-D-muramoyl-L-alanyl-D-glutamyl-meso-2,6-diaminopimeloyl-D-alanyl-D-alanine + UDP-N-acetyl-alpha-D-glucosamine = di-trans,octa-cis-undecaprenyl diphospho-[N-acetyl-alpha-D-glucosaminyl-(1-&gt;4)]-N-acetyl-alpha-D-muramoyl-L-alanyl-D-glutamyl-meso-2,6-diaminopimeloyl-D-alanyl-D-alanine + UDP + H(+). It participates in cell wall biogenesis; peptidoglycan biosynthesis. Functionally, cell wall formation. Catalyzes the transfer of a GlcNAc subunit on undecaprenyl-pyrophosphoryl-MurNAc-pentapeptide (lipid intermediate I) to form undecaprenyl-pyrophosphoryl-MurNAc-(pentapeptide)GlcNAc (lipid intermediate II). This is UDP-N-acetylglucosamine--N-acetylmuramyl-(pentapeptide) pyrophosphoryl-undecaprenol N-acetylglucosamine transferase from Desulforamulus reducens (strain ATCC BAA-1160 / DSM 100696 / MI-1) (Desulfotomaculum reducens).